A 156-amino-acid chain; its full sequence is Small ribosomal subunit protein uS7 (156 aa).

It belongs to the universal ribosomal protein uS7 family. Part of the 30S ribosomal subunit. Contacts proteins S9 and S11.

Its function is as follows. One of the primary rRNA binding proteins, it binds directly to 16S rRNA where it nucleates assembly of the head domain of the 30S subunit. Is located at the subunit interface close to the decoding center, probably blocks exit of the E-site tRNA. This Maridesulfovibrio salexigens (strain ATCC 14822 / DSM 2638 / NCIMB 8403 / VKM B-1763) (Desulfovibrio salexigens) protein is Small ribosomal subunit protein uS7.